The primary structure comprises 306 residues: MNDYNHYFHFPREEWRKLEVSKDQILTAEELEEIRGLNDRISLQDISEIYLPLIKLIAIQYHEAIFIHGEKMEYLKKKESRAPFIIALAGSVAVGKSTTARVFKLMLDRWFSKTRQVELVTTDGFLYPNKVLEERGIMDKKGFPESYDRDRFAKFLTDLKANKEDVEIPLYSHFTYDVLDETRVIHNPDIVIIEGINVLQADQHESLFPSDFFDFSVYMDANESDIKKWYLERFFMLRETAFQDESSYFHPYTKISKQEAETFALGVWDTINGVNLKENIEKTKYRADLVLHKGTDHLISDIYLRK.

ATP is bound at residue 90-97 (GSVAVGKS).

It belongs to the prokaryotic pantothenate kinase family.

Its subcellular location is the cytoplasm. It catalyses the reaction (R)-pantothenate + ATP = (R)-4'-phosphopantothenate + ADP + H(+). Its pathway is cofactor biosynthesis; coenzyme A biosynthesis; CoA from (R)-pantothenate: step 1/5. This chain is Pantothenate kinase, found in Listeria monocytogenes serotype 4a (strain HCC23).